Reading from the N-terminus, the 392-residue chain is Probable glucan endo-1,6-beta-glucosidase B (392 aa).

Residues 1 to 18 (MKVTRLAVLNTLATLTVA) form the signal peptide. A glycan (N-linked (GlcNAc...) asparagine) is linked at Asn-31. Glu-220 functions as the Proton donor in the catalytic mechanism. Residue Glu-322 is the Nucleophile of the active site.

This sequence belongs to the glycosyl hydrolase 5 (cellulase A) family.

Its subcellular location is the secreted. It catalyses the reaction Random hydrolysis of (1-&gt;6)-linkages in (1-&gt;6)-beta-D-glucans.. Beta-glucanases participate in the metabolism of beta-glucan, the main structural component of the cell wall. Acts on lutean, pustulan and 1,6-oligo-beta-D-glucosides. The sequence is that of Probable glucan endo-1,6-beta-glucosidase B (exgB) from Aspergillus flavus (strain ATCC 200026 / FGSC A1120 / IAM 13836 / NRRL 3357 / JCM 12722 / SRRC 167).